A 912-amino-acid polypeptide reads, in one-letter code: Alpha-actinin-4 (912 aa).

Positions 1–267 (MVDYHAANQA…IMTYVSSFYH (267 aa)) are actin-binding. The interval 12–27 (QYGPNSGGGNGAGGGG) is interaction with VCL. A disordered region spans residues 12 to 31 (QYGPNSGGGNGAGGGGSMGD). Positions 16–29 (NSGGGNGAGGGGSM) are enriched in gly residues. Y32 is modified (phosphotyrosine). Positions 41-62 (RDLLLDPAWEKQQRKTFTAWCN) are interaction with VCL. Calponin-homology (CH) domains follow at residues 51–155 (KQQR…LRFA) and 164–270 (TSAK…HAFS). Positions 85 to 89 (LMLLL) match the LXXLL motif motif. The interaction with VCL stretch occupies residues 109–127 (KINNVNKALDFIASKGVKL). Position 115 is an N6-acetyllysine (K115). The polyphosphoinositide (PIP2)-binding stretch occupies residues 178-193 (TAPYKNVNVQNFHISW). K215 is modified (N6-acetyllysine). T250 is subject to Phosphothreonine. 4 Spectrin repeats span residues 294–404 (HLME…WLLN), 414–519 (HLAE…ALEK), 529–640 (QLHL…ALLE), and 650–753 (HLRR…EVEN). N6-acetyllysine occurs at positions 593 and 626. Residue S697 is modified to Phosphoserine. Residues 737–912 (WEQLLTTIAR…STALYGESDL (176 aa)) form a mediates interaction with MICALL2 region. 2 EF-hand domains span residues 766 to 801 (EQMQ…LGYD) and 807 to 842 (QGDA…ETTD). D779 is a Ca(2+) binding site. K780 bears the N6-acetyllysine mark. Ca(2+) is bound by residues D781 and E790. N6-acetyllysine is present on K860. S910 carries the post-translational modification Phosphoserine.

Belongs to the alpha-actinin family. As to quaternary structure, homodimer; antiparallel. Interacts with MAGI1. Interacts with PDLIM2. Identified in a complex with CASK, IQGAP1, MAGI2, NPHS1, SPTAN1 and SPTBN1. Identified in a IGF2BP1-dependent mRNP granule complex containing untranslated mRNAs. Component of the CART complex, at least composed of ACTN4, HGS/HRS, MYO5B and TRIM3. Binds TRIM3 at the N-terminus. Interacts with MICALL2 (preferentially in opened conformation); stimulated by RAB13 activation. Interacts with PPARG and RARA. Binds to VCL; this interaction triggers VCL conformational changes. Interacts with SEPTIN14. Interacts with IGSF8.

The protein localises to the nucleus. Its subcellular location is the cytoplasm. It is found in the cell junction. The protein resides in the cytoskeleton. It localises to the stress fiber. The protein localises to the perinuclear region. In terms of biological role, F-actin cross-linking protein which is thought to anchor actin to a variety of intracellular structures. This is a bundling protein. Probably involved in vesicular trafficking via its association with the CART complex. The CART complex is necessary for efficient transferrin receptor recycling but not for EGFR degradation. Involved in tight junction assembly in epithelial cells probably through interaction with MICALL2. Links MICALL2 to the actin cytoskeleton and recruits it to the tight junctions. May also function as a transcriptional coactivator, stimulating transcription mediated by the nuclear hormone receptors PPARG and RARA. Association with IGSF8 regulates the immune synapse formation and is required for efficient T-cell activation. The polypeptide is Alpha-actinin-4 (Mus musculus (Mouse)).